Here is a 131-residue protein sequence, read N- to C-terminus: MHFSKIIAGSALSSVALAEFQNGTVTTHVTATGYTTYCPYPTTITLTICEEENICTKRPIVVSEPTTVTVTEPCIISTSYETTEVVVTTTLPSSLSPSSVAPANVTSFEGAGSKNVASALVGVVAIAAAMM.

A signal peptide spans 1 to 18 (MHFSKIIAGSALSSVALA). N-linked (GlcNAc...) asparagine glycans are attached at residues Asn-22 and Asn-104. Residue Gly-110 is the site of GPI-anchor amidated glycine attachment. Positions 111–131 (AGSKNVASALVGVVAIAAAMM) are cleaved as a propeptide — removed in mature form.

Its subcellular location is the cell membrane. GPI-anchored protein involved in proper cell wall integrity. Does not seem to be directly involved in the synthesis of the cell wall. Required for normal virulence in a mouse model of disseminated candidiasis. This Candida albicans (strain SC5314 / ATCC MYA-2876) (Yeast) protein is Predicted GPI-anchored protein 26 (PGA26).